A 345-amino-acid polypeptide reads, in one-letter code: Neurotrimin (345 aa).

Residues 1–30 form the signal peptide; the sequence is MGVCGSLFLPWKCLVVVSLRLLFLVPTGVP. 3 Ig-like C2-type domains span residues 39-126, 136-218, and 222-309; these read PKAM…PKTS, PKIV…VKVT, and PPYI…ASIT. 3 N-linked (GlcNAc...) asparagine glycosylation sites follow: asparagine 44, asparagine 70, and asparagine 152. Cysteine 57 and cysteine 115 are oxidised to a cystine. 2 disulfide bridges follow: cysteine 157-cysteine 201 and cysteine 243-cysteine 295. Asparagine 284, asparagine 292, asparagine 305, and asparagine 321 each carry an N-linked (GlcNAc...) asparagine glycan. A lipid anchor (GPI-anchor amidated asparagine) is attached at asparagine 321. Residues 322–345 constitute a propeptide, removed in mature form; the sequence is GTSSRRAGCLWLLPLLVLHLLLKF.

The protein belongs to the immunoglobulin superfamily. IgLON family.

It localises to the cell membrane. Its function is as follows. Neural cell adhesion molecule. The polypeptide is Neurotrimin (NTM) (Bos taurus (Bovine)).